The chain runs to 344 residues: Ferrochelatase (344 aa).

Residues histidine 214 and glutamate 295 each contribute to the Fe cation site.

This sequence belongs to the ferrochelatase family.

The protein localises to the cytoplasm. It carries out the reaction heme b + 2 H(+) = protoporphyrin IX + Fe(2+). Its pathway is porphyrin-containing compound metabolism; protoheme biosynthesis; protoheme from protoporphyrin-IX: step 1/1. Its function is as follows. Catalyzes the ferrous insertion into protoporphyrin IX. This chain is Ferrochelatase, found in Rhizobium etli (strain ATCC 51251 / DSM 11541 / JCM 21823 / NBRC 15573 / CFN 42).